A 350-amino-acid chain; its full sequence is Hydroxymethylglutaryl-CoA synthase (350 aa).

E83 functions as the Proton donor/acceptor in the catalytic mechanism. The active-site Acyl-thioester intermediate is the C115. Residues C115 and T156 each contribute to the (3S)-3-hydroxy-3-methylglutaryl-CoA site. R204 provides a ligand contact to CoA. Residues T206 and H239 each coordinate (3S)-3-hydroxy-3-methylglutaryl-CoA. Residue H239 is the Proton donor/acceptor of the active site. K244 is a binding site for CoA. Residues N271 and S301 each coordinate (3S)-3-hydroxy-3-methylglutaryl-CoA.

Belongs to the thiolase-like superfamily. Archaeal HMG-CoA synthase family. Interacts with acetoacetyl-CoA thiolase that catalyzes the precedent step in the pathway and with a DUF35 protein. The acetoacetyl-CoA thiolase/HMG-CoA synthase complex channels the intermediate via a fused CoA-binding site, which allows for efficient coupling of the endergonic thiolase reaction with the exergonic HMGCS reaction.

It carries out the reaction acetoacetyl-CoA + acetyl-CoA + H2O = (3S)-3-hydroxy-3-methylglutaryl-CoA + CoA + H(+). It participates in metabolic intermediate biosynthesis; (R)-mevalonate biosynthesis; (R)-mevalonate from acetyl-CoA: step 2/3. In terms of biological role, catalyzes the condensation of acetyl-CoA with acetoacetyl-CoA to form 3-hydroxy-3-methylglutaryl-CoA (HMG-CoA). Functions in the mevalonate (MVA) pathway leading to isopentenyl diphosphate (IPP), a key precursor for the biosynthesis of isoprenoid compounds that are building blocks of archaeal membrane lipids. The chain is Hydroxymethylglutaryl-CoA synthase from Thermococcus kodakarensis (strain ATCC BAA-918 / JCM 12380 / KOD1) (Pyrococcus kodakaraensis (strain KOD1)).